The primary structure comprises 180 residues: MMFSSIDSLLKISTSSQNEDQKLESHPSPPSQIPNYSTSCSEELMKMAAKAAQFAAQASLENSFSSSTSPTSTVTPLSAYTSLVQPVLPLIYDHLALTYSVNAWQAWGKMRRPRTAFSSEQLVQLEKQFSDNRYLSRPRRYQLAQQLSLSETQIKIWFQNRRMKNKRCPSSTPIQSTSSS.

The disordered stretch occupies residues 15–37; it reads SSQNEDQKLESHPSPPSQIPNYS. The segment at residues 110–169 is a DNA-binding region (homeobox); sequence MRRPRTAFSSEQLVQLEKQFSDNRYLSRPRRYQLAQQLSLSETQIKIWFQNRRMKNKRCP.

Expressed in VB motor neurons in the ventral nerve cord.

It is found in the nucleus. In terms of biological role, transcription factor. Plays a role, downstream from homeobox protein unc-4 and Wnt signaling, in specifying synaptic inputs to A-class motor neurons. Involved in patterning of the synaptic outputs of the postmitotic DA class cholinergic motor neurons. This is Homeobox protein ceh-12 (ceh-12) from Caenorhabditis elegans.